Reading from the N-terminus, the 128-residue chain is SH2 domain-containing protein 1A (128 aa).

Positions 6-102 (VYHGKISRET…GIVIPLQYPV (97 aa)) constitute an SH2 domain. The tract at residues 67 to 92 (DTAPGVHKRFFRKIKNLISAFQKPDQ) is interaction with FYN SH3 domain. At Lys89 the chain carries N6-acetyllysine. Residues 103–128 (EKKSSARSTQGATGRREDPDVFLKTP) form a disordered region. Over residues 116–128 (GRREDPDVFLKTP) the composition is skewed to basic and acidic residues.

In terms of assembly, interacts with CD84, CD244, LY9, SLAMF1 and FYN. Interacts with NTRK1, NTRK2 and NTRK3.

Its subcellular location is the cytoplasm. Cytoplasmic adapter regulating receptors of the signaling lymphocytic activation molecule (SLAM) family such as SLAMF1, CD244, LY9, CD84, SLAMF6 and SLAMF7. In SLAM signaling seems to cooperate with SH2D1B/EAT-2. Initially it has been proposed that association with SLAMF1 prevents SLAMF1 binding to inhibitory effectors including INPP5D/SHIP1 and PTPN11/SHP-2. However, by simultaneous interactions, recruits FYN which subsequently phosphorylates and activates SLAMF1. Positively regulates CD244/2B4- and CD84-mediated natural killer (NK) cell functions. Can also promote CD48-, SLAMF6 -, LY9-, and SLAMF7-mediated NK cell activation. In the context of NK cell-mediated cytotoxicity enhances conjugate formation with target cells. May also regulate the activity of the neurotrophin receptors NTRK1, NTRK2 and NTRK3. The polypeptide is SH2 domain-containing protein 1A (SH2D1A) (Sus scrofa (Pig)).